A 131-amino-acid chain; its full sequence is MLHITTMTDKAPIKTNKRLQQTQAQVNEVVDIMRVNVDKVLERDKNLSELDGRADALQAGASQFEASAGKLKRKFWWKNCKMLAVLGVLVVILIIVLIVWVVSEQKNKVEQSEHSSHHLVMDNSSHLLSEQ.

Over 1–81 (MLHITTMTDK…KRKFWWKNCK (81 aa)) the chain is Cytoplasmic. The region spanning 18–78 (RLQQTQAQVN…GKLKRKFWWK (61 aa)) is the v-SNARE coiled-coil homology domain. Residues 82 to 102 (MLAVLGVLVVILIIVLIVWVV) traverse the membrane as a helical; Anchor for type IV membrane protein segment. At 103–131 (SEQKNKVEQSEHSSHHLVMDNSSHLLSEQ) the chain is on the vesicular side. Positions 112–131 (SEHSSHHLVMDNSSHLLSEQ) are disordered. Residues 122–131 (DNSSHLLSEQ) show a composition bias toward polar residues.

This sequence belongs to the synaptobrevin family.

It is found in the cytoplasmic vesicle. It localises to the secretory vesicle. The protein localises to the synaptic vesicle membrane. The protein resides in the synapse. Its subcellular location is the synaptosome. Unknown, but synaptobrevins are presumed to be involved in targeting and fusion of synaptic vesicles with the presynaptic membrane as well as in neurotransmitter release. This chain is Synaptobrevin-like protein, found in Schistosoma mansoni (Blood fluke).